Consider the following 313-residue polypeptide: 2,3-dihydroxyphenylpropionate/2,3-dihydroxicinnamic acid 1,2-dioxygenase (313 aa).

Histidine 115 serves as the catalytic Proton donor. The active-site Proton acceptor is histidine 179.

It belongs to the LigB/MhpB extradiol dioxygenase family. In terms of assembly, homotetramer. It depends on Fe(2+) as a cofactor.

The enzyme catalyses 3-(2,3-dihydroxyphenyl)propanoate + O2 = (2Z,4E)-2-hydroxy-6-oxonona-2,4-dienedioate + H(+). The catalysed reaction is (2E)-3-(2,3-dihydroxyphenyl)prop-2-enoate + O2 = (2Z,4E,7E)-2-hydroxy-6-oxonona-2,4,7-trienedioate + H(+). It participates in aromatic compound metabolism; 3-phenylpropanoate degradation. In terms of biological role, catalyzes the non-heme iron(II)-dependent oxidative cleavage of 2,3-dihydroxyphenylpropionic acid and 2,3-dihydroxicinnamic acid into 2-hydroxy-6-ketononadienedioate and 2-hydroxy-6-ketononatrienedioate, respectively. The polypeptide is 2,3-dihydroxyphenylpropionate/2,3-dihydroxicinnamic acid 1,2-dioxygenase (Xanthobacter autotrophicus (strain ATCC BAA-1158 / Py2)).